Reading from the N-terminus, the 394-residue chain is Flap endonuclease 1 (394 aa).

The N-domain stretch occupies residues 1–104 (MGIKQLFSVI…GELAKRFQRK (104 aa)). Position 34 (Asp-34) interacts with Mg(2+). The DNA site is built by Arg-47 and Arg-70. 5 residues coordinate Mg(2+): Asp-86, Glu-158, Glu-160, Asp-179, and Asp-181. The tract at residues 122–253 (DVEKFSRRTV…STALKLIREH (132 aa)) is I-domain. DNA is bound at residue Glu-158. DNA is bound by residues Gly-231 and Asp-233. Asp-233 serves as a coordination point for Mg(2+). The segment at 341–349 (QQARIEGFF) is interaction with PCNA. Basic and acidic residues predominate over residues 356–383 (EEEKKAHKRKLEEQAEQKRKKVKEEKKE). The interval 356 to 394 (EEEKKAHKRKLEEQAEQKRKKVKEEKKEKAKLKAKPRGA) is disordered. Basic residues predominate over residues 384 to 394 (KAKLKAKPRGA).

This sequence belongs to the XPG/RAD2 endonuclease family. FEN1 subfamily. Interacts with PCNA. Three molecules of dnr-8/fen1 bind to one PCNA trimer with each molecule binding to one PCNA monomer. PCNA stimulates the nuclease activity without altering cleavage specificity. Mg(2+) is required as a cofactor. In terms of processing, phosphorylated. Phosphorylation upon DNA damage induces relocalization to the nuclear plasma.

The protein resides in the nucleus. The protein localises to the nucleolus. It localises to the nucleoplasm. It is found in the mitochondrion. In terms of biological role, structure-specific nuclease with 5'-flap endonuclease and 5'-3' exonuclease activities involved in DNA replication and repair. During DNA replication, cleaves the 5'-overhanging flap structure that is generated by displacement synthesis when DNA polymerase encounters the 5'-end of a downstream Okazaki fragment. It enters the flap from the 5'-end and then tracks to cleave the flap base, leaving a nick for ligation. Also involved in the long patch base excision repair (LP-BER) pathway, by cleaving within the apurinic/apyrimidinic (AP) site-terminated flap. Acts as a genome stabilization factor that prevents flaps from equilibrating into structures that lead to duplications and deletions. Also possesses 5'-3' exonuclease activity on nicked or gapped double-stranded DNA, and exhibits RNase H activity. Also involved in replication and repair of rDNA and in repairing mitochondrial DNA. The chain is Flap endonuclease 1 (dnr-8) from Neurospora crassa (strain ATCC 24698 / 74-OR23-1A / CBS 708.71 / DSM 1257 / FGSC 987).